Here is a 318-residue protein sequence, read N- to C-terminus: Ribose-phosphate pyrophosphokinase 2 (318 aa).

An ATP-binding site is contributed by 96 to 101 (RQDKKD). Residues D128, H130, D139, and D143 each contribute to the Mg(2+) site. Residue H130 coordinates ATP. A binding of phosphoribosylpyrophosphate region spans residues 212–227 (KDRVAILVDDMADTCG).

The protein belongs to the ribose-phosphate pyrophosphokinase family. Homodimer. The active form is probably a hexamer composed of 3 homodimers. Mg(2+) is required as a cofactor.

It catalyses the reaction D-ribose 5-phosphate + ATP = 5-phospho-alpha-D-ribose 1-diphosphate + AMP + H(+). The protein operates within metabolic intermediate biosynthesis; 5-phospho-alpha-D-ribose 1-diphosphate biosynthesis; 5-phospho-alpha-D-ribose 1-diphosphate from D-ribose 5-phosphate (route I): step 1/1. With respect to regulation, activated by magnesium and inorganic phosphate. Competitively or non-competitively inhibited by ADP, 2,3-bisphosphoglyceride or GDP. Functionally, catalyzes the synthesis of phosphoribosylpyrophosphate (PRPP) that is essential for nucleotide synthesis. This is Ribose-phosphate pyrophosphokinase 2 (Prps2) from Mus musculus (Mouse).